A 160-amino-acid chain; its full sequence is Transcriptional repressor NrdR (160 aa).

A zinc finger lies at 3-34; that stretch reads CPYCQYEDTQVKDSRPSEEGTVIRRRRICSVC. The ATP-cone domain occupies 49–139; it reads LLVLKKSGRY…VYRDFRNASD (91 aa).

This sequence belongs to the NrdR family. Zn(2+) is required as a cofactor.

Functionally, negatively regulates transcription of bacterial ribonucleotide reductase nrd genes and operons by binding to NrdR-boxes. The sequence is that of Transcriptional repressor NrdR from Bartonella henselae (strain ATCC 49882 / DSM 28221 / CCUG 30454 / Houston 1) (Rochalimaea henselae).